Reading from the N-terminus, the 1030-residue chain is Protein KRBA1 (1030 aa).

5 disordered regions span residues 27–56 (EPGR…GQPR), 80–208 (KGAM…NSPL), 225–255 (HPET…GSPP), 281–505 (EAQD…GLEN), and 634–788 (GGPS…PASS). Phosphoserine is present on serine 101. Residues 102-114 (PEAAAAREPCPLR) are compositionally biased toward low complexity. The segment covering 124–143 (PTSQPHLATTPTDSSCSSGP) has biased composition (polar residues). The span at 157-168 (TADKPWPTRKEG) shows a compositional bias: basic and acidic residues. Residues serine 177, serine 182, serine 184, serine 229, serine 253, and serine 355 each carry the phosphoserine modification. Over residues 372 to 389 (PEAQAASASSSPLEALEA) the composition is skewed to low complexity. Over residues 397 to 418 (NGSSPSQLPPTSCSQNPQPGDS) the composition is skewed to polar residues. The segment covering 419-437 (RSQKPELQPHRSHSEEATR) has biased composition (basic and acidic residues). Composition is skewed to low complexity over residues 485-502 (QGQH…PLQG) and 642-651 (PGSSSSFSGS). Residues 654-674 (EDPRPEPDLWKPLPQERDRLP) are compositionally biased toward basic and acidic residues. Over residues 689–698 (TPAGSSGGSP) the composition is skewed to gly residues. Positions 760-784 (QGPPELPSESPPPELPPPEAAPPVL) are enriched in pro residues. The stretch at 799–832 (LQQELHSLGAALAEKLDRLATALAGLAQEVATMR) forms a coiled coil. Over residues 870–887 (RHLPYWRQKGPTRPKPKI) the composition is skewed to basic residues. The interval 870–1030 (RHLPYWRQKG…EHRDPRWGAH (161 aa)) is disordered. Residues 913–923 (PLPPDAPPAEP) are compositionally biased toward pro residues. 2 stretches are compositionally biased toward low complexity: residues 929 to 953 (SSSQ…LLAH) and 966 to 984 (PAAL…ADAD). The span at 1019–1030 (GGEHRDPRWGAH) shows a compositional bias: basic and acidic residues.

As to expression, expressed in brain (cerebellum).

This is Protein KRBA1 (KRBA1) from Homo sapiens (Human).